Reading from the N-terminus, the 712-residue chain is Amine oxidase [copper-containing] gamma 1 (712 aa).

The signal sequence occupies residues 1–24; that stretch reads MAEPSFARLFLLFFSFLLIFATYS. 2 N-linked (GlcNAc...) asparagine glycosylation sites follow: Asn-146 and Asn-173. An intrachain disulfide couples Cys-188 to Cys-210. 352–363 is a binding site for substrate; that stretch reads YMDAGELGLGPT. Asp-354 acts as the Proton acceptor in catalysis. Cysteines 373 and 399 form a disulfide. 439 to 444 is a binding site for substrate; that stretch reads VGNYDY. The active-site Schiff-base intermediate with substrate; via topaquinone is the Tyr-442. 2',4',5'-topaquinone is present on Tyr-442. Residues His-499 and His-501 each coordinate Cu cation. Residues Asp-508, Met-509, and Asp-510 each contribute to the Mn(2+) site. N-linked (GlcNAc...) asparagine glycans are attached at residues Asn-516 and Asn-617. Residues Asp-651 and Ile-652 each contribute to the Mn(2+) site. Cu cation is bound at residue His-662.

Belongs to the copper/topaquinone oxidase family. In terms of assembly, homodimer. The cofactor is Cu cation. Zn(2+) serves as cofactor. L-topaquinone is required as a cofactor. Requires Mn(2+) as cofactor. In terms of processing, topaquinone (TPQ) is generated by copper-dependent autoxidation of a specific tyrosyl residue. In terms of tissue distribution, mostly expressed in roots, stems and flowers, and, at lower levels, in leaves and cotyledons.

The protein resides in the secreted. Its subcellular location is the extracellular space. It localises to the apoplast. It catalyses the reaction a primary methyl amine + O2 + H2O = an aldehyde + H2O2 + NH4(+). Its pathway is amine and polyamine degradation; putrescine degradation. Copper amine oxidase that can use putrescine and spermidine as substrates. Required for abscisic acid- (ABA) and polyamine- (PA) and H(2)O(2)-dependent induced nitric oxide (NO) biosynthesis. Involved in ABA signal transduction and in responses to osmotic stress. The polypeptide is Amine oxidase [copper-containing] gamma 1 (Arabidopsis thaliana (Mouse-ear cress)).